An 86-amino-acid chain; its full sequence is Large ribosomal subunit protein bL31B (86 aa).

Belongs to the bacterial ribosomal protein bL31 family. Type B subfamily. As to quaternary structure, part of the 50S ribosomal subunit.

In Streptococcus equi subsp. equi (strain 4047), this protein is Large ribosomal subunit protein bL31B.